The primary structure comprises 329 residues: Pantothenate kinase (329 aa).

Residue 107–114 (GSVAVGKS) coordinates ATP.

It belongs to the prokaryotic pantothenate kinase family.

It localises to the cytoplasm. The enzyme catalyses (R)-pantothenate + ATP = (R)-4'-phosphopantothenate + ADP + H(+). Its pathway is cofactor biosynthesis; coenzyme A biosynthesis; CoA from (R)-pantothenate: step 1/5. This chain is Pantothenate kinase, found in Streptomyces avermitilis (strain ATCC 31267 / DSM 46492 / JCM 5070 / NBRC 14893 / NCIMB 12804 / NRRL 8165 / MA-4680).